The following is a 529-amino-acid chain: Bifunctional purine biosynthesis protein PurH (529 aa).

In terms of domain architecture, MGS-like spans Met-1–Val-148.

The protein belongs to the PurH family.

It carries out the reaction (6R)-10-formyltetrahydrofolate + 5-amino-1-(5-phospho-beta-D-ribosyl)imidazole-4-carboxamide = 5-formamido-1-(5-phospho-D-ribosyl)imidazole-4-carboxamide + (6S)-5,6,7,8-tetrahydrofolate. The enzyme catalyses IMP + H2O = 5-formamido-1-(5-phospho-D-ribosyl)imidazole-4-carboxamide. The protein operates within purine metabolism; IMP biosynthesis via de novo pathway; 5-formamido-1-(5-phospho-D-ribosyl)imidazole-4-carboxamide from 5-amino-1-(5-phospho-D-ribosyl)imidazole-4-carboxamide (10-formyl THF route): step 1/1. Its pathway is purine metabolism; IMP biosynthesis via de novo pathway; IMP from 5-formamido-1-(5-phospho-D-ribosyl)imidazole-4-carboxamide: step 1/1. This Erwinia tasmaniensis (strain DSM 17950 / CFBP 7177 / CIP 109463 / NCPPB 4357 / Et1/99) protein is Bifunctional purine biosynthesis protein PurH.